The primary structure comprises 132 residues: Large ribosomal subunit protein bL19 (132 aa).

Belongs to the bacterial ribosomal protein bL19 family.

Functionally, this protein is located at the 30S-50S ribosomal subunit interface and may play a role in the structure and function of the aminoacyl-tRNA binding site. This is Large ribosomal subunit protein bL19 from Maricaulis maris (strain MCS10) (Caulobacter maris).